The primary structure comprises 93 residues: Protein translocase subunit SecE (93 aa).

Positions 1–33 (MTDALGSIDMPDAEDETREKKARKGGKRGKKGP) are disordered. Positions 20 to 33 (KKARKGGKRGKKGP) are enriched in basic residues. The chain crosses the membrane as a helical span at residues 64–84 (TVVIVFVVIMIGLVTVIDFGF).

It belongs to the SecE/SEC61-gamma family. Component of the Sec protein translocase complex. Heterotrimer consisting of SecY, SecE and SecG subunits. The heterotrimers can form oligomers, although 1 heterotrimer is thought to be able to translocate proteins. Interacts with the ribosome. Interacts with SecDF, and other proteins may be involved. Interacts with SecA.

The protein localises to the cell membrane. Its function is as follows. Essential subunit of the Sec protein translocation channel SecYEG. Clamps together the 2 halves of SecY. May contact the channel plug during translocation. This chain is Protein translocase subunit SecE, found in Streptomyces virginiae (Streptomyces cinnamonensis).